The chain runs to 191 residues: MADSQDPLHERTRRLLSDYIFFCAREPDTPEPPPTSVEAALLRSVTRQIQQEHQEFFSSFCESRGNRLELVKQMADKLLSKDQDFSWSQLVMLLAFAGTLMNQGPYMAVKQKRDLGNRVIVTRDCCLIVNFLYNLLMGRRHRARLEALGGWDGFCRFFKNPLPLGFWRRLLIQAFLSGFFATAIFFIWKRL.

Residues 79 to 98 (LSKDQDFSWSQLVMLLAFAG) carry the BH1 motif. A Glycyl lysine isopeptide (Lys-Gly) (interchain with G-Cter in ubiquitin) cross-link involves residue Lys112. Residues 144–155 (RLEALGGWDGFC) carry the BH2 motif. A helical transmembrane segment spans residues 166–183 (FWRRLLIQAFLSGFFATA).

Belongs to the Bcl-2 family. Interacts with BAX. Interacts with BCL2 and BCL2L1/BCLX. Interacts with APAF1. Interacts with ITPR1, ITPR2 and ITPR3; the interaction with ITPR1 is increased in the presence of AHCLY1. Interacts with AHCYL1. Interacts with HIP1R (via ENTH and I/LWEQ domains). Interacts with CASP9. Interacts with BCL2L11/BIM. Interacts with BIK. Interacts with UBQLN4. Interacts with NME2/NM23-H2. Interacts with PMAIP1/NOXA. Interacts with TPX2. Interacts with UBQLN1; in the cytoplasm. Interacts (via BH1 domain) with BECN1. Requires Ca(2+) as cofactor. Monoubiquitinated by UBQLN1; results in stabilization of BCL2L10 protein abundance and in relocalization from mitochondria to cytoplasm. In terms of tissue distribution, expressed in multiple embryonic tissues. Restricted to the ovary and testis in adult mice.

The protein localises to the mitochondrion. It is found in the nucleus membrane. The protein resides in the endoplasmic reticulum. It localises to the cytoplasm. Its subcellular location is the cytoskeleton. The protein localises to the spindle. Promotes cell survival by suppressing apoptosis induced by BAX but not BAK. Increases binding of AHCYL1/IRBIT to ITPR1. Reduces ITPR1-mediated calcium release from the endoplasmic reticulum cooperatively with AHCYL1/IRBIT under normal cellular conditions. Under apoptotic stress conditions, dissociates from ITPR1 and is displaced from mitochondria-associated endoplasmic reticulum membranes, leading to increased Ca(2+) transfer to mitochondria which promotes apoptosis. Required for the correct formation of the microtubule organizing center during oocyte cell division, potentially via regulation of protein abundance and localization of other microtubule organizing center components such as AURKA and TPX2. This Mus musculus (Mouse) protein is Bcl-2-like protein 10.